The sequence spans 435 residues: Xylose isomerase (435 aa).

Catalysis depends on residues His-100 and Asp-103. Residues Glu-231, Glu-267, His-270, Asp-295, Asp-306, Asp-308, and Asp-338 each contribute to the Mg(2+) site.

This sequence belongs to the xylose isomerase family. As to quaternary structure, homotetramer. Mg(2+) is required as a cofactor.

It localises to the cytoplasm. It catalyses the reaction alpha-D-xylose = alpha-D-xylulofuranose. The polypeptide is Xylose isomerase (Brucella suis biovar 1 (strain 1330)).